Here is a 353-residue protein sequence, read N- to C-terminus: Thiamine-phosphate synthase (353 aa).

The interval 1 to 128 (MKSMPFAPIA…AASAAAIRYG (128 aa)) is unknown. The interval 129–353 (LYDLEVTVLQ…TSLQLLEALR (225 aa)) is thiamine-phosphate synthase. 4-amino-2-methyl-5-(diphosphooxymethyl)pyrimidine-binding positions include 185–189 (QYRNK) and asparagine 217. Mg(2+) is bound by residues aspartate 218 and aspartate 237. 4-amino-2-methyl-5-(diphosphooxymethyl)pyrimidine is bound at residue serine 256. 282–284 (TAT) contributes to the 2-[(2R,5Z)-2-carboxy-4-methylthiazol-5(2H)-ylidene]ethyl phosphate binding site. Lysine 285 contacts 4-amino-2-methyl-5-(diphosphooxymethyl)pyrimidine. Glycine 312 is a binding site for 2-[(2R,5Z)-2-carboxy-4-methylthiazol-5(2H)-ylidene]ethyl phosphate.

The protein belongs to the thiamine-phosphate synthase family. It depends on Mg(2+) as a cofactor.

It catalyses the reaction 2-[(2R,5Z)-2-carboxy-4-methylthiazol-5(2H)-ylidene]ethyl phosphate + 4-amino-2-methyl-5-(diphosphooxymethyl)pyrimidine + 2 H(+) = thiamine phosphate + CO2 + diphosphate. The catalysed reaction is 2-(2-carboxy-4-methylthiazol-5-yl)ethyl phosphate + 4-amino-2-methyl-5-(diphosphooxymethyl)pyrimidine + 2 H(+) = thiamine phosphate + CO2 + diphosphate. It carries out the reaction 4-methyl-5-(2-phosphooxyethyl)-thiazole + 4-amino-2-methyl-5-(diphosphooxymethyl)pyrimidine + H(+) = thiamine phosphate + diphosphate. It functions in the pathway cofactor biosynthesis; thiamine diphosphate biosynthesis; thiamine phosphate from 4-amino-2-methyl-5-diphosphomethylpyrimidine and 4-methyl-5-(2-phosphoethyl)-thiazole: step 1/1. Condenses 4-methyl-5-(beta-hydroxyethyl)thiazole monophosphate (THZ-P) and 2-methyl-4-amino-5-hydroxymethyl pyrimidine pyrophosphate (HMP-PP) to form thiamine monophosphate (TMP). The polypeptide is Thiamine-phosphate synthase (Prochlorococcus marinus (strain MIT 9313)).